The following is a 604-amino-acid chain: Glutamine--fructose-6-phosphate aminotransferase [isomerizing] (604 aa).

The active-site Nucleophile; for GATase activity is C2. Residues C2–E216 enclose the Glutamine amidotransferase type-2 domain. SIS domains follow at residues L281–A420 and V453–P594. The For Fru-6P isomerization activity role is filled by K599.

Homodimer.

The protein resides in the cytoplasm. The enzyme catalyses D-fructose 6-phosphate + L-glutamine = D-glucosamine 6-phosphate + L-glutamate. Catalyzes the first step in hexosamine metabolism, converting fructose-6P into glucosamine-6P using glutamine as a nitrogen source. The sequence is that of Glutamine--fructose-6-phosphate aminotransferase [isomerizing] from Thermus thermophilus (strain ATCC BAA-163 / DSM 7039 / HB27).